Reading from the N-terminus, the 916-residue chain is MNMSLSRIVKAAPLRRTTLAMALGALGALGAAPAAHADWNNQSIIKAGERQHGIHIKQSDGAGVRTATGTTIKVSGRQAQGVLLENPAAELRFQNGSVTSSGQLFDEGVRRFLGTVTVKAGKLVADHATLANVSDTRDDDGIALYVAGEQAQASIADSTLQGAGGVRVERGANVTVQRSTIVDGGLHIGTLQPLQPEDLPPSRVVLGDTSVTAVPASGAPAAVSVFGANELTVDGGHITGGRAAGVAAMDGAIVHLQRATIRRGDAPAGGAVPGGAVPGGAVPGGFGPLLDGWYGVDVSDSTVDLAQSIVEAPQLGAAIRAGRGARVTVSGGSLSAPHGNVIETGGGARRFPPPASPLSITLQAGARAQGRALLYRVLPEPVKLTLAGGAQGQGDIVATELPPIPGASSGPLDVALASQARWTGATRAVDSLSIDNATWVMTDNSNVGALRLASDGSVDFQQPAEAGRFKVLMVDTLAGSGLFRMNVFADLGLSDKLVVMRDASGQHRLWVRNSGSEPASANTMLLVQTPRGSAATFTLANKDGKVDIGTYRYRLAANGNGQWSLVGAKAPPAPKPAPQPGPQPGPQPPQPPQPPQRQPEAPAPQPPAGRELSAAANAAVNTGGVGLASTLWYAESNALSKRLGELRLNPDAGGAWGRGFAQRQQLDNRAGRRFDQKVAGFELGADHAVAVAGGRWHLGGLAGYTRGDRGFTGDGGGHTDSVHVGGYATYIANSGFYLDATLRASRLENDFKVAGSDGYAVKGKYRTHGVGASLEAGRRFAHADGWFLEPQAELAVFRVGGGAYRAANGLRVRDEGGSSVLGRLGLEVGKRIELAGGRQVQPYIKASVLQEFDGAGTVRTNGIAHRTELRGTRAELGLGMAAALGRGHSLYASYEYSKGPKLAMPWTFHAGYRYSW.

The N-terminal stretch at 1 to 37 is a signal peptide; sequence MNMSLSRIVKAAPLRRTTLAMALGALGALGAAPAAHA. The Cell attachment site; involved in adhesion to various eukaryotic cell lines signature appears at 263–265; the sequence is RGD. 3 consecutive repeat copies span residues 269–273, 274–278, and 279–283. A 4 X 5 AA tandem repeats of G-G-A-V-P region spans residues 269-288; the sequence is GGAVPGGAVPGGAVPGGFGP. The 4; approximate repeat unit spans residues 284–288; it reads GGFGP. Residues 564-613 form a disordered region; the sequence is SLVGAKAPPAPKPAPQPGPQPGPQPPQPPQPPQRQPEAPAPQPPAGRELS. Residues 571 to 607 are compositionally biased toward pro residues; that stretch reads PPAPKPAPQPGPQPGPQPPQPPQPPQRQPEAPAPQPP. Positions 578–606 are 6 X 3 AA repeats of P-Q-P; sequence PQPGPQPGPQPPQPPQPPQRQPEAPAPQP. An Autotransporter domain is found at 648-916; that stretch reads LNPDAGGAWG…TFHAGYRYSW (269 aa). Residues 706–708 carry the Cell attachment site motif; it reads RGD.

Monomer.

It is found in the periplasm. It localises to the secreted. Its subcellular location is the cell surface. The protein resides in the cell outer membrane. Functionally, agglutinogen that binds to eukaryotic cells; a process mediated by the R-G-D sequence. Pertactin may have a role in bacterial adhesion, and thus play a role in virulence. May contribute to the disease state of whooping cough. The chain is Pertactin autotransporter (prn) from Bordetella bronchiseptica (strain ATCC BAA-588 / NCTC 13252 / RB50) (Alcaligenes bronchisepticus).